Here is a 263-residue protein sequence, read N- to C-terminus: Endonuclease 8 (263 aa).

Pro2 functions as the Schiff-base intermediate with DNA in the catalytic mechanism. Glu3 functions as the Proton donor in the catalytic mechanism. The active-site Proton donor; for beta-elimination activity is the Lys53. DNA contacts are provided by Gln70, Arg125, and Asn169. Residues 229–263 form an FPG-type zinc finger; it reads KVFHREGKACERCGGVIERSTLSSRPFYGCPVCQK. Residue Arg253 is the Proton donor; for delta-elimination activity of the active site.

This sequence belongs to the FPG family. Zn(2+) is required as a cofactor.

It carries out the reaction 2'-deoxyribonucleotide-(2'-deoxyribose 5'-phosphate)-2'-deoxyribonucleotide-DNA = a 3'-end 2'-deoxyribonucleotide-(2,3-dehydro-2,3-deoxyribose 5'-phosphate)-DNA + a 5'-end 5'-phospho-2'-deoxyribonucleoside-DNA + H(+). Involved in base excision repair of DNA damaged by oxidation or by mutagenic agents. Acts as a DNA glycosylase that recognizes and removes damaged bases. Has a preference for oxidized pyrimidines, such as thymine glycol, 5,6-dihydrouracil and 5,6-dihydrothymine. Has AP (apurinic/apyrimidinic) lyase activity and introduces nicks in the DNA strand. Cleaves the DNA backbone by beta-delta elimination to generate a single-strand break at the site of the removed base with both 3'- and 5'-phosphates. The protein is Endonuclease 8 of Enterobacter sp. (strain 638).